We begin with the raw amino-acid sequence, 638 residues long: Threonine--tRNA ligase (638 aa).

Residues 1-62 (MYQLTLPDKS…EKNSNIEVLT (62 aa)) enclose the TGS domain. The segment at 246 to 537 (DHRKIGKEMD…LIEHYEGKFP (292 aa)) is catalytic. Zn(2+)-binding residues include Cys-337, His-388, and His-514.

The protein belongs to the class-II aminoacyl-tRNA synthetase family. As to quaternary structure, homodimer. Zn(2+) serves as cofactor.

It is found in the cytoplasm. The catalysed reaction is tRNA(Thr) + L-threonine + ATP = L-threonyl-tRNA(Thr) + AMP + diphosphate + H(+). Its function is as follows. Catalyzes the attachment of threonine to tRNA(Thr) in a two-step reaction: L-threonine is first activated by ATP to form Thr-AMP and then transferred to the acceptor end of tRNA(Thr). Also edits incorrectly charged L-seryl-tRNA(Thr). This is Threonine--tRNA ligase from Leptospira interrogans serogroup Icterohaemorrhagiae serovar copenhageni (strain Fiocruz L1-130).